The chain runs to 598 residues: Thiol:disulfide interchange protein DsbD (598 aa).

The signal sequence occupies residues 1 to 19 (MAYRIITLILLLCSTSATA). A disulfide bridge links Cys122 with Cys128. The disordered stretch occupies residues 147 to 187 (DGQATAIEPMPSTSSRPAFNPPLPVEPRPAPELATSPAPAA). The span at 165–176 (FNPPLPVEPRPA) shows a compositional bias: pro residues. A run of 7 helical transmembrane segments spans residues 197–217 (LPFT…TPCV), 242–262 (LLAF…GLVV), 277–297 (YVLV…FGLF), 330–350 (IAGL…LLYI), 356–376 (LWLG…PLIL), 391–411 (WMSH…VFLL), and 423–443 (LWSM…LGAT). Cysteines 216 and 338 form a disulfide. The 140-residue stretch at 459 to 598 (LVSARPLQDW…FSAHLRDWQA (140 aa)) folds into the Thioredoxin domain. Cys513 and Cys516 form a disulfide bridge.

It belongs to the thioredoxin family. DsbD subfamily.

The protein localises to the cell inner membrane. It carries out the reaction [protein]-dithiol + NAD(+) = [protein]-disulfide + NADH + H(+). It catalyses the reaction [protein]-dithiol + NADP(+) = [protein]-disulfide + NADPH + H(+). Its function is as follows. Required to facilitate the formation of correct disulfide bonds in some periplasmic proteins and for the assembly of the periplasmic c-type cytochromes. Acts by transferring electrons from cytoplasmic thioredoxin to the periplasm. This transfer involves a cascade of disulfide bond formation and reduction steps. The polypeptide is Thiol:disulfide interchange protein DsbD (Klebsiella pneumoniae subsp. pneumoniae (strain ATCC 700721 / MGH 78578)).